We begin with the raw amino-acid sequence, 553 residues long: 4-coumarate--CoA ligase (553 aa).

Residues serine 198, serine 199, glycine 200, threonine 201, threonine 202, and lysine 206 each coordinate ATP. Residues tyrosine 248 and serine 252 each contribute to the (E)-4-coumaroyl-AMP site. Lysine 269 contacts CoA. The interval 271–340 (EIVPFLELIQ…AKFPNAKLGQ (70 aa)) is SBD1. Residues alanine 318, glutamine 340, glycine 341, threonine 345, and methionine 353 each contribute to the (E)-4-coumaroyl-AMP site. Residues glutamine 340, glycine 341, and threonine 345 each contribute to the ATP site. The segment at 341–408 (GYGMTEAGPV…IRGDQIMKGY (68 aa)) is SBD2. Positions 429 and 444 each coordinate ATP. Residues lysine 446 and lysine 450 each coordinate (E)-4-coumaroyl-AMP. Lysine 452 and glycine 453 together coordinate CoA. ATP is bound at residue lysine 535.

The protein belongs to the ATP-dependent AMP-binding enzyme family. The cofactor is Mg(2+).

The catalysed reaction is (E)-4-coumarate + ATP + CoA = (E)-4-coumaroyl-CoA + AMP + diphosphate. The enzyme catalyses (E)-4-coumarate + ATP + H(+) = (E)-4-coumaroyl-AMP + diphosphate. It catalyses the reaction (E)-4-coumaroyl-AMP + CoA = (E)-4-coumaroyl-CoA + AMP + H(+). The protein operates within phytoalexin biosynthesis; 3,4',5-trihydroxystilbene biosynthesis; 3,4',5-trihydroxystilbene from trans-4-coumarate: step 1/2. Its function is as follows. Carboxylate--CoA ligase that may use 4-coumarate as substrate. Follows a two-step reaction mechanism, wherein the carboxylate substrate first undergoes adenylation by ATP, followed by a thioesterification in the presence of CoA to yield the final CoA thioester. The chain is 4-coumarate--CoA ligase from Vanilla planifolia (Vanilla).